We begin with the raw amino-acid sequence, 812 residues long: MTGIEQKTPVGGSETGGADGLYAVLPLRDIVVFPHMIVPLFVGREKSIRALEEVMGVDKQILLATQKNAADDDPAPDAIYEIGTIANVLQLLKLPDGTVKVLVEGTARAKISKFTDREDYHEAYAAALQEPEEDAVEIEALARSVVSDFENYVKLNKKISPEVVGTASQIDDYSKLADTVASHLAIKIPEKQEMLSVLSVRERLEKALSFMEAEISVLQVEKRIRSRVKRQMEKTQREYYLNEQMKAIQKELGDSEDGRDEVAEIEERITKTKLSKEAREKALAELKKLRSMSPMSAEATVVRNYLDWLLSIPWGKKSKVKQDLNFAQEVLDAEHFGLGKVKERIVEYLAVQARSTKIKGPILCLVGPPGVGKTSLARSIAKATGREYVRMSLGGVRDEAEIRGHRRTYIGSMPGKVIQSMKKAKKSNPLFLLDEIDKMGQDFRGDPSSAMLEVLDPKQNATFMDHYLEVEYDLSNVMFVTTANTMNIPGPLLDRMEIIRIAGYTEDEKLEIAKRHLLPKAIKDHALQPKEFSVTEDALRNVIRHYTREAGVRSLEREVMTLARKAVTEILKTKKKSVKITDKNLSDYLGVEKFRFGQIDGEDQVGVVTGLAWTEVGGELLTIEGVMMPGKGRMTVTGNLRDVMKESISAAASYVRSRAIDFGIEPPLFDKRDIHVHVPEGATPKDGPSAGIAMVTAIVSVLTGIPVRKDIAMTGEVTLRGRVLPIGGLKEKLLATLRGGIKKVLIPEENAKDLAEIPDNVKNNLEIVPVSRVGEVLKHALVRQPEPIEWTEQENPTAVPPVEDEAGASLAH.

A Lon N-terminal domain is found at 22–215; that stretch reads YAVLPLRDIV…KALSFMEAEI (194 aa). 367 to 374 lines the ATP pocket; the sequence is GPPGVGKT. Residues 602–783 form the Lon proteolytic domain; it reads EDQVGVVTGL…GEVLKHALVR (182 aa). Active-site residues include S689 and K732. The tract at residues 787 to 812 is disordered; that stretch reads PIEWTEQENPTAVPPVEDEAGASLAH.

This sequence belongs to the peptidase S16 family. In terms of assembly, homohexamer. Organized in a ring with a central cavity.

The protein resides in the cytoplasm. The catalysed reaction is Hydrolysis of proteins in presence of ATP.. ATP-dependent serine protease that mediates the selective degradation of mutant and abnormal proteins as well as certain short-lived regulatory proteins. Required for cellular homeostasis and for survival from DNA damage and developmental changes induced by stress. Degrades polypeptides processively to yield small peptide fragments that are 5 to 10 amino acids long. Binds to DNA in a double-stranded, site-specific manner. In Brucella melitensis biotype 1 (strain ATCC 23456 / CCUG 17765 / NCTC 10094 / 16M), this protein is Lon protease.